We begin with the raw amino-acid sequence, 436 residues long: Gamma-glutamyl phosphate reductase (436 aa).

This sequence belongs to the gamma-glutamyl phosphate reductase family.

The protein resides in the cytoplasm. It catalyses the reaction L-glutamate 5-semialdehyde + phosphate + NADP(+) = L-glutamyl 5-phosphate + NADPH + H(+). It functions in the pathway amino-acid biosynthesis; L-proline biosynthesis; L-glutamate 5-semialdehyde from L-glutamate: step 2/2. In terms of biological role, catalyzes the NADPH-dependent reduction of L-glutamate 5-phosphate into L-glutamate 5-semialdehyde and phosphate. The product spontaneously undergoes cyclization to form 1-pyrroline-5-carboxylate. The protein is Gamma-glutamyl phosphate reductase of Prochlorococcus marinus (strain MIT 9301).